We begin with the raw amino-acid sequence, 678 residues long: Protein KHNYN (678 aa).

Serine 10 carries the phosphoserine modification. Disordered regions lie at residues 222 to 251 and 347 to 407; these read QGVR…ARGD and LHNG…ARGG. Residues 355–367 show a composition bias toward pro residues; it reads PRVPSPPPAPEPP. Position 359 is a phosphoserine (serine 359). Over residues 370 to 388 the composition is skewed to basic and acidic residues; that stretch reads CGDRGDCGDRGDVGDRGDK. Residues 437–589 enclose the RNase NYN domain; that stretch reads LRHIVIDGSN…LGRNGPTLDE (153 aa). The interval 595–633 is disordered; that stretch reads ARTQGSSKAQHPSRGFAEHGKQQQGREEEKGSGGIRKTR. Over residues 610-633 the composition is skewed to basic and acidic residues; sequence FAEHGKQQQGREEEKGSGGIRKTR.

Belongs to the N4BP1 family.

This is Protein KHNYN (KHNYN) from Homo sapiens (Human).